A 347-amino-acid polypeptide reads, in one-letter code: MKVLGLETSCDETGLAIFDSELLAEGKNGLLGQVLYSQIELHATYGGVVPELASRDHIRKLVPLLDELLAQCDISKDEIDAIAYTKGPGLIGALMTGALFGRSLAYGLDVPAIGIHHMEGHLLSPLLGPNPPKFPFVSLLVSGGHTLLVAAHGIGEYEILGESIDDAAGECFDKAAKMLGLPYPGGPNVARLAEQGDPLKYELPRPMLHRGLDFSFSGMKTAVHNLIKDTPGSDNDEQVRADIAASFQHAVVDTLVKKCVKALKQTGMKQLVIAGGVSANLHLRQTLEQQLAKIGATVHYAPLELCTDNGAMIAYAGYQRLQAGQQDALSVSCVPRWNISDLPALAQ.

Residues His-117 and His-121 each contribute to the Fe cation site. Residues Leu-140–Gly-144, Asp-173, Gly-186, and Asn-280 each bind substrate. A Fe cation-binding site is contributed by Asp-308.

This sequence belongs to the KAE1 / TsaD family. Requires Fe(2+) as cofactor.

The protein resides in the cytoplasm. The catalysed reaction is L-threonylcarbamoyladenylate + adenosine(37) in tRNA = N(6)-L-threonylcarbamoyladenosine(37) in tRNA + AMP + H(+). Functionally, required for the formation of a threonylcarbamoyl group on adenosine at position 37 (t(6)A37) in tRNAs that read codons beginning with adenine. Is involved in the transfer of the threonylcarbamoyl moiety of threonylcarbamoyl-AMP (TC-AMP) to the N6 group of A37, together with TsaE and TsaB. TsaD likely plays a direct catalytic role in this reaction. This chain is tRNA N6-adenosine threonylcarbamoyltransferase, found in Psychrobacter sp. (strain PRwf-1).